We begin with the raw amino-acid sequence, 585 residues long: MHTPPALPRRFQGGGRVRTPGSHRQGKDNLERDPSGGCVPDFLPQAQDSNHFIMESLFCESSGDSSLEKEFLGAPVGPSVSTPNSQHSSPSRSLSANSIKVEMYSDEESSRLLGPDERLLEKDDSVIVEDSLSEPLGYCDGSGPEPHSPGGIRLPNGKLKCDVCGMVCIGPNVLMVHKRSHTGERPFHCNQCGASFTQKGNLLRHIKLHSGEKPFKCPFCNYACRRRDALTGHLRTHSVSSPTVGKPYKCNYCGRSYKQQSTLEEHKERCHNYLQSLSTEAQALAGQPGDEIRDLEMVPDSMLHSSSERPTFIDRLANSLTKRKRSTPQKFVGEKQMRFSLSDLPYDVNSGGYEKDVELVAHHSLEPGFGSSLAFVGAEHLRPLRLPPTNCISELTPVISSVYTQMQPLPGRLELPGSREAGEGPEDLADGGPLLYRPRGPLTDPGASPSNGCQDSTDTESNHEDRVAGVVSLPQGPPPQPPPTIVVGRHSPAYAKEDPKPQEGLLRGTPGPSKEVLRVVGESGEPVKAFKCEHCRILFLDHVMFTIHMGCHGFRDPFECNICGYHSQDRYEFSSHIVRGEHKVG.

Disordered stretches follow at residues 1–43 and 68–98; these read MHTP…PDFL and EKEF…SANS. Basic and acidic residues predominate over residues 25–34; that stretch reads QGKDNLERDP. Residues 79–98 are compositionally biased toward polar residues; sequence SVSTPNSQHSSPSRSLSANS. Residue lysine 100 forms a Glycyl lysine isopeptide (Lys-Gly) (interchain with G-Cter in SUMO2) linkage. A Phosphoserine modification is found at serine 105. C2H2-type zinc fingers lie at residues 159–181, 187–209, 215–237, and 248–271; these read LKCD…KRSH, FHCN…IKLH, FKCP…LRTH, and YKCN…ERCH. The interaction with FOXP3 stretch occupies residues 281–585; it reads AQALAGQPGD…HIVRGEHKVG (305 aa). Residue lysine 335 is modified to N6-acetyllysine. A disordered region spans residues 410–489; the sequence is PGRLELPGSR…QPPPTIVVGR (80 aa). The CTBP-binding motif PEDLA signature appears at 425-429; the sequence is PEDLA. Residues 475 to 484 show a composition bias toward pro residues; sequence QGPPPQPPPT. Lysine 500 is covalently cross-linked (Glycyl lysine isopeptide (Lys-Gly) (interchain with G-Cter in SUMO2)). C2H2-type zinc fingers lie at residues 530–552 and 558–582; these read FKCE…MGCH and FECN…RGEH.

The protein belongs to the Ikaros C2H2-type zinc-finger protein family. In terms of assembly, self-associates. Interacts with other family members; IKZF1, IKZF2, IKZF3 and IKZF5. Interacts with CTBP2. Interacts with SPI1, MITF, FOXP3 and CTBP1. As to expression, highly expressed in skeletal muscle, low levels of expression in heart, thymus, kidney, liver, and spleen. Expressed in the hematopoietic cell lines MOLT-4, NALM-6 and K-562. Highly expressed in THP-1 and M-07e cell lines, which have characteristics of myeloid and early megakaryocytic cells respectively.

Its subcellular location is the nucleus. In terms of biological role, DNA-binding protein that binds to the 5'GGGAATRCC-3' Ikaros-binding sequence. Transcriptional repressor. Interacts with SPI1 and MITF to repress transcription of the CTSK and ACP5 promoters via recruitment of corepressors SIN3A and CTBP2. May be involved in the development of central and peripheral nervous systems. Essential for the inhibitory function of regulatory T-cells (Treg). Mediates FOXP3-mediated gene silencing in regulatory T-cells (Treg) via recruitment of corepressor CTBP1. In Homo sapiens (Human), this protein is Zinc finger protein Eos (IKZF4).